Consider the following 433-residue polypeptide: GTPase Der (433 aa).

2 consecutive EngA-type G domains span residues 3 to 167 (NIVA…QDTI) and 174 to 349 (PKIA…TNKT). Residues 9-16 (GRPNVGKS), 56-60 (DTGGY), 119-122 (NKAD), 180-187 (GRPNVGKS), 227-231 (DTAGI), and 292-295 (NKWD) contribute to the GTP site. In terms of domain architecture, KH-like spans 350 to 433 (QKISTAALNQ…VPVQLVFRKK (84 aa)).

It belongs to the TRAFAC class TrmE-Era-EngA-EngB-Septin-like GTPase superfamily. EngA (Der) GTPase family. In terms of assembly, associates with the 50S ribosomal subunit.

In terms of biological role, GTPase that plays an essential role in the late steps of ribosome biogenesis. This Amoebophilus asiaticus (strain 5a2) protein is GTPase Der.